A 156-amino-acid polypeptide reads, in one-letter code: Lipoprotein signal peptidase (156 aa).

3 helical membrane passes run 5-25 (FKFI…DQWV), 64-84 (YLHL…KTLL), and 89-109 (IAFG…FIYG). Catalysis depends on residues D113 and D130. Residues 122-142 (NFAIFNVADVMINISVALILI) form a helical membrane-spanning segment.

Belongs to the peptidase A8 family.

The protein resides in the cell inner membrane. It carries out the reaction Release of signal peptides from bacterial membrane prolipoproteins. Hydrolyzes -Xaa-Yaa-Zaa-|-(S,diacylglyceryl)Cys-, in which Xaa is hydrophobic (preferably Leu), and Yaa (Ala or Ser) and Zaa (Gly or Ala) have small, neutral side chains.. It participates in protein modification; lipoprotein biosynthesis (signal peptide cleavage). Its function is as follows. This protein specifically catalyzes the removal of signal peptides from prolipoproteins. This Campylobacter jejuni subsp. doylei (strain ATCC BAA-1458 / RM4099 / 269.97) protein is Lipoprotein signal peptidase.